The primary structure comprises 394 residues: DNA replication and repair protein RecF (394 aa).

Position 30-37 (30-37 (GPNAAGKT)) interacts with ATP.

Belongs to the RecF family.

The protein resides in the cytoplasm. Functionally, the RecF protein is involved in DNA metabolism; it is required for DNA replication and normal SOS inducibility. RecF binds preferentially to single-stranded, linear DNA. It also seems to bind ATP. The polypeptide is DNA replication and repair protein RecF (Roseiflexus castenholzii (strain DSM 13941 / HLO8)).